The sequence spans 483 residues: Spermatogenesis-defective protein 39 homolog (483 aa).

This sequence belongs to the SPE39 family. In terms of assembly, interacts with vps33b. As to expression, high levels detected in liver and small intestine of larvae at 5 days post-fertilization.

Its subcellular location is the cytoplasm. The protein resides in the cytoplasmic vesicle. It is found in the early endosome. The protein localises to the recycling endosome. It localises to the late endosome. Functionally, proposed to be involved in endosomal maturation implicating in part vps33b. In epithelial cells, the vps33b:vipas39 complex may play a role in the apical rab11a-dependent recycling pathway and in the maintenance of the apical-basolateral polarity. May play a role in lysosomal trafficking, probably via association with the core HOPS complex in a discrete population of endosomes; the functions seems to be independent of vps33b. May play a role in vesicular trafficking during spermatogenesis. May be involved in direct or indirect transcriptional regulation of E-cadherin. This Danio rerio (Zebrafish) protein is Spermatogenesis-defective protein 39 homolog (vipas39).